The chain runs to 133 residues: Large-conductance mechanosensitive channel (133 aa).

2 consecutive transmembrane segments (helical) span residues 14-34 (VIDL…VSSL) and 67-87 (GNFI…FMFV).

The protein belongs to the MscL family. As to quaternary structure, homopentamer.

Its subcellular location is the cell membrane. Its function is as follows. Channel that opens in response to stretch forces in the membrane lipid bilayer. May participate in the regulation of osmotic pressure changes within the cell. The protein is Large-conductance mechanosensitive channel of Bacillus mycoides (strain KBAB4) (Bacillus weihenstephanensis).